The following is a 300-amino-acid chain: 33 kDa chaperonin (300 aa).

2 disulfide bridges follow: cysteine 235–cysteine 237 and cysteine 269–cysteine 272.

The protein belongs to the HSP33 family. Under oxidizing conditions two disulfide bonds are formed involving the reactive cysteines. Under reducing conditions zinc is bound to the reactive cysteines and the protein is inactive.

It localises to the cytoplasm. Its function is as follows. Redox regulated molecular chaperone. Protects both thermally unfolding and oxidatively damaged proteins from irreversible aggregation. Plays an important role in the bacterial defense system toward oxidative stress. The protein is 33 kDa chaperonin of Pseudomonas fluorescens (strain SBW25).